The following is a 494-amino-acid chain: UDP-glucose 6-dehydrogenase (494 aa).

NAD(+) is bound by residues 11–16, D36, R41, 89–93, and 130–132; these read GAGYVG, VNTPT, and STV. The segment at 88 to 110 is disordered; sequence SVNTPTKTYGMGKGRAADLKYIE. Positions 129–135 are allosteric switch region; the sequence is KSTVPVR. The Proton donor/acceptor role is filled by E161. Residues 161–165, 220–224, R260, and 267–273 contribute to the substrate site; these read EFLAE, KLAAN, and KASVGFG. Position 165 (E165) interacts with NAD(+). The active-site Proton donor/acceptor is the K220. C276 (nucleophile) is an active-site residue. Residue 276–279 participates in NAD(+) binding; the sequence is CFQK. The tract at residues 321 to 325 is important for formation of active hexamer structure; it reads SLFNT. 338–339 is a binding site for substrate; sequence FK. NAD(+) is bound at residue R346. R442 provides a ligand contact to substrate. Residues 466 to 494 form a disordered region; it reads VSAKRIPFASSCEIPKFSLQDPPVKKPRV.

This sequence belongs to the UDP-glucose/GDP-mannose dehydrogenase family. Homohexamer.

The catalysed reaction is UDP-alpha-D-glucose + 2 NAD(+) + H2O = UDP-alpha-D-glucuronate + 2 NADH + 3 H(+). The protein operates within nucleotide-sugar biosynthesis; UDP-alpha-D-glucuronate biosynthesis; UDP-alpha-D-glucuronate from UDP-alpha-D-glucose: step 1/1. UDP-alpha-D-xylose (UDX) acts as a feedback inhibitor. It binds at the same site as the substrate, but functions as allosteric inhibitor by triggering a conformation change that disrupts the active hexameric ring structure and gives rise to an inactive, horseshoe-shaped hexamer. Catalyzes the formation of UDP-alpha-D-glucuronate, a constituent of complex glycosaminoglycans. Required for the biosynthesis of chondroitin sulfate and heparan sulfate. Required for embryonic development via its role in the biosynthesis of glycosaminoglycans. In Gallus gallus (Chicken), this protein is UDP-glucose 6-dehydrogenase (UGDH).